The chain runs to 378 residues: Mevalonate kinase (378 aa).

ATP is bound by residues K10, S138, and 143–149 (GSGLGSS). Residues S149 and E193 each contribute to the Mg(2+) site. D204 serves as the catalytic Proton acceptor.

Belongs to the GHMP kinase family. Mevalonate kinase subfamily. The cofactor is Mg(2+).

Its subcellular location is the cytoplasm. It catalyses the reaction (R)-mevalonate + ATP = (R)-5-phosphomevalonate + ADP + H(+). The protein operates within isoprenoid biosynthesis; isopentenyl diphosphate biosynthesis via mevalonate pathway; isopentenyl diphosphate from (R)-mevalonate: step 1/3. Its activity is regulated as follows. Its activity is inhibited in vitro by geranyl pyrophosphate (GPP) and farnesyl pyrophosphate (FPP) that bind competitively at the ATP-binding site on the enzyme. Its function is as follows. Catalyzes the phosphorylation of mevalonate to mevalonate 5-phosphate, a key step in isoprenoid and cholesterol biosynthesis. The protein is Mevalonate kinase of Arabidopsis thaliana (Mouse-ear cress).